Reading from the N-terminus, the 328-residue chain is 4-hydroxy-2-oxoglutarate aldolase, mitochondrial (328 aa).

Residues 1–26 constitute a mitochondrion transit peptide; sequence MFGRTLFPARVIALGSGLFRTPLRTL. Residue 76–77 coordinates substrate; the sequence is SN. Residue Lys-195 is the Schiff-base intermediate with substrate of the active site. Residues Ser-197 and Gly-221 each coordinate substrate.

The protein belongs to the DapA family. Homotetramer.

It localises to the mitochondrion. The enzyme catalyses (4S)-4-hydroxy-2-oxoglutarate = glyoxylate + pyruvate. It catalyses the reaction (4R)-4-hydroxy-2-oxoglutarate = glyoxylate + pyruvate. Its activity is regulated as follows. Inhibited by divalent cations. Its function is as follows. Catalyzes the final step in the metabolic pathway of hydroxyproline. This chain is 4-hydroxy-2-oxoglutarate aldolase, mitochondrial (hoga1), found in Xenopus tropicalis (Western clawed frog).